Consider the following 408-residue polypeptide: Lysosomal phospholipase A and acyltransferase (408 aa).

The N-terminal stretch at 1–31 (MGLRRGPCPAALLPGGFLFLLLLADPALLAG) is a signal peptide. Asp-42 is a substrate binding site. A disulfide bond links Cys-61 and Cys-85. N-linked (GlcNAc...) asparagine glycosylation occurs at Asn-95. The active-site Acyl-ester intermediate is the Ser-194. Zn(2+) is bound at residue Ser-194. Met-195 is a binding site for substrate. Residues Asn-269 and Asn-285 are each glycosylated (N-linked (GlcNAc...) asparagine). Positions 336 and 351 each coordinate Zn(2+). Catalysis depends on charge relay system residues Asp-356 and His-388. Position 388 (His-388) interacts with Zn(2+). Residue Asn-394 is glycosylated (N-linked (GlcNAc...) asparagine).

It belongs to the AB hydrolase superfamily. Lipase family. N-glycosylated. N-glycosylation is important for maturation of the enzyme and normal subcellular location.

The protein localises to the secreted. The protein resides in the lysosome. It localises to the membrane. The enzyme catalyses a 1,2-diacyl-sn-glycero-3-phosphocholine + H2O = a 2-acyl-sn-glycero-3-phosphocholine + a fatty acid + H(+). It carries out the reaction 1-hexadecanoyl-2-(9Z-octadecenoyl)-sn-glycero-3-phosphocholine + H2O = 2-(9Z-octadecenoyl)-sn-glycero-3-phosphocholine + hexadecanoate + H(+). It catalyses the reaction 1,2-di-(9Z-octadecenoyl)-sn-glycero-3-phosphocholine + H2O = 2-(9Z-octadecenoyl)-sn-glycero-3-phosphocholine + (9Z)-octadecenoate + H(+). The catalysed reaction is 1-hexadecanoyl-2-glutaroyl-sn-glycero-3-phosphocholine + H2O = 2-glutaroyl-sn-glycero-3-phosphocholine + hexadecanoate + H(+). The enzyme catalyses 1-hexadecanoyl-2-nonadioyl-sn-glycero-3-phosphocholine + H2O = 2-nonadioyl-sn-glycero-3-phosphocholine + hexadecanoate + H(+). It carries out the reaction 1-hexadecanoyl-2-(5-oxopentanoyl)-sn-glycero-3-phosphocholine + H2O = 2-(5-oxopentanoyl)-sn-glycero-3-phosphocholine + hexadecanoate + H(+). It catalyses the reaction 1-hexadecanoyl-2-(9-oxononanoyl)-sn-glycero-3-phosphocholine + H2O = 2-(9-oxononanoyl)-sn-glycero-3-phosphocholine + hexadecanoate + H(+). The catalysed reaction is 1,2-dihexadecanoyl-sn-glycero-3-phosphocholine + H2O = 2-hexadecanoyl-sn-glycero-3-phosphocholine + hexadecanoate + H(+). The enzyme catalyses a 1,2-diacyl-sn-glycero-3-phosphocholine + H2O = a 1-acyl-sn-glycero-3-phosphocholine + a fatty acid + H(+). It carries out the reaction 1-hexadecanoyl-2-(9Z-octadecenoyl)-sn-glycero-3-phosphocholine + H2O = 1-hexadecanoyl-sn-glycero-3-phosphocholine + (9Z)-octadecenoate + H(+). It catalyses the reaction 1,2-di-(9Z-octadecenoyl)-sn-glycero-3-phosphocholine + H2O = 1-(9Z-octadecenoyl)-sn-glycero-3-phosphocholine + (9Z)-octadecenoate + H(+). The catalysed reaction is 1,2-dihexadecanoyl-sn-glycero-3-phosphocholine + H2O = 1-hexadecanoyl-sn-glycero-3-phosphocholine + hexadecanoate + H(+). The enzyme catalyses a 1-acyl-sn-glycero-3-phosphocholine + H2O = sn-glycerol 3-phosphocholine + a fatty acid + H(+). It carries out the reaction 1-hexadecanoyl-sn-glycero-3-phosphocholine + H2O = sn-glycerol 3-phosphocholine + hexadecanoate + H(+). It catalyses the reaction N-(acetyl)-sphing-4-enine + a 1,2-diacyl-sn-glycero-3-phosphoethanolamine = 1-O-acyl-N-(acetyl)-sphing-4-enine + a 2-acyl-sn-glycero-3-phosphoethanolamine. The catalysed reaction is 1-hexadecanoyl-2-(9Z-octadecenoyl)-sn-glycero-3-phosphoethanolamine + N-(acetyl)-sphing-4-enine = 2-(9Z-octadecenoyl)-sn-glycero-3-phosphoethanolamine + 1-hexadecanoyl-N-(acetyl)-sphing-4-enine. The enzyme catalyses 1-hexadecanoyl-2-(9Z,12Z-octadecadienoyl)-sn-glycero-3-phosphoethanolamine + N-(acetyl)-sphing-4-enine = 2-(9Z,12Z)-octadecadienoyl-sn-glycero-3-phosphoethanolamine + 1-hexadecanoyl-N-(acetyl)-sphing-4-enine. It carries out the reaction 1-hexadecanoyl-2-(5Z,8Z,11Z,14Z-eicosatetraenoyl)-sn-glycero-3-phosphoethanolamine + N-(acetyl)-sphing-4-enine = 2-(5Z,8Z,11Z,14Z)-eicosatetraenoyl-sn-glycero-3-phosphoethanolamine + 1-hexadecanoyl-N-(acetyl)-sphing-4-enine. It catalyses the reaction N-(acetyl)-sphing-4-enine + a 1,2-diacyl-sn-glycero-3-phosphoethanolamine = 1-O-acyl-N-(acetyl)-sphing-4-enine + a 1-acyl-sn-glycero-3-phosphoethanolamine. The catalysed reaction is 1-hexadecanoyl-2-(9Z-octadecenoyl)-sn-glycero-3-phosphoethanolamine + N-(acetyl)-sphing-4-enine = 1-(9Z-octadecenoyl)-N-(acetyl)-sphing-4-enine + 1-hexadecanoyl-sn-glycero-3-phosphoethanolamine. The enzyme catalyses 1-hexadecanoyl-2-(9Z,12Z-octadecadienoyl)-sn-glycero-3-phosphoethanolamine + N-(acetyl)-sphing-4-enine = 1-(9Z,12Z-octadecadienoyl)-N-acetylsphing-4-enine + 1-hexadecanoyl-sn-glycero-3-phosphoethanolamine. It carries out the reaction 1-hexadecanoyl-2-(5Z,8Z,11Z,14Z-eicosatetraenoyl)-sn-glycero-3-phosphoethanolamine + N-(acetyl)-sphing-4-enine = 1-(5Z,8Z,11Z,14Z)-eicosatetraenoyl-N-(acetyl)-sphing-4-enine + 1-hexadecanoyl-sn-glycero-3-phosphoethanolamine. It catalyses the reaction N-(acetyl)-sphing-4-enine + a 1,2-diacyl-sn-glycero-3-phosphocholine = 1-O-acyl-N-(acetyl)-sphing-4-enine + a 2-acyl-sn-glycero-3-phosphocholine. The catalysed reaction is 1-hexadecanoyl-2-(9Z-octadecenoyl)-sn-glycero-3-phosphocholine + N-(acetyl)-sphing-4-enine = 1-hexadecanoyl-N-(acetyl)-sphing-4-enine + 2-(9Z-octadecenoyl)-sn-glycero-3-phosphocholine. The enzyme catalyses 1-hexadecanoyl-2-(9Z,12Z-octadecadienoyl)-sn-glycero-3-phosphocholine + N-(acetyl)-sphing-4-enine = 2-(9Z,12Z-octadecadienoyl)-sn-glycero-3-phosphocholine + 1-hexadecanoyl-N-(acetyl)-sphing-4-enine. It carries out the reaction 1-hexadecanoyl-2-(5Z,8Z,11Z,14Z-eicosatetraenoyl)-sn-glycero-3-phosphocholine + N-(acetyl)-sphing-4-enine = 1-hexadecanoyl-N-(acetyl)-sphing-4-enine + 2-(5Z,8Z,11Z,14Z)-eicosatetraenoyl-sn-glycero-3-phosphocholine. It catalyses the reaction 1-hexadecanoyl-2-(4Z,7Z,10Z,13Z,16Z,19Z-docosahexaenoyl)-sn-glycero-3-phosphocholine + N-(acetyl)-sphing-4-enine = 2-(4Z,7Z,10Z,13Z,16Z,19Z-docosahexaenoyl)-sn-glycero-3-phosphocholine + 1-hexadecanoyl-N-(acetyl)-sphing-4-enine. The catalysed reaction is 1-hexadecanoyl-2-nonadioyl-sn-glycero-3-phosphocholine + N-(acetyl)-sphing-4-enine = 2-nonadioyl-sn-glycero-3-phosphocholine + 1-hexadecanoyl-N-(acetyl)-sphing-4-enine. The enzyme catalyses 1-octadecanoyl-2-(9Z-octadecenoyl)-sn-glycero-3-phosphocholine + N-(acetyl)-sphing-4-enine = 1-octadecanoyl-N-(acetyl)-sphing-4-enine + 2-(9Z-octadecenoyl)-sn-glycero-3-phosphocholine. It carries out the reaction 1-(9Z)-octadecenoyl-2-octadecanoyl-sn-glycero-3-phosphocholine + N-(acetyl)-sphing-4-enine = 2-octadecanoyl-sn-glycero-3-phosphocholine + 1-(9Z-octadecenoyl)-N-(acetyl)-sphing-4-enine. It catalyses the reaction 1-octadecanoyl-2-(5Z,8Z,11Z,14Z-eicosatetraenoyl)-sn-glycero-3-phosphocholine + N-(acetyl)-sphing-4-enine = 1-octadecanoyl-N-(acetyl)-sphing-4-enine + 2-(5Z,8Z,11Z,14Z)-eicosatetraenoyl-sn-glycero-3-phosphocholine. The catalysed reaction is 1-(9Z-octadecenoyl)-2-hexadecanoyl-sn-glycero-3-phosphocholine + N-(acetyl)-sphing-4-enine = 1-(9Z-octadecenoyl)-N-(acetyl)-sphing-4-enine + 2-hexadecanoyl-sn-glycero-3-phosphocholine. The enzyme catalyses N-(acetyl)-sphing-4-enine + a 1,2-diacyl-sn-glycero-3-phosphocholine = 1-O-acyl-N-(acetyl)-sphing-4-enine + a 1-acyl-sn-glycero-3-phosphocholine. It carries out the reaction 1-hexadecanoyl-2-(9Z-octadecenoyl)-sn-glycero-3-phosphocholine + N-(acetyl)-sphing-4-enine = 1-(9Z-octadecenoyl)-N-(acetyl)-sphing-4-enine + 1-hexadecanoyl-sn-glycero-3-phosphocholine. It catalyses the reaction 1-hexadecanoyl-2-(9Z,12Z-octadecadienoyl)-sn-glycero-3-phosphocholine + N-(acetyl)-sphing-4-enine = 1-(9Z,12Z-octadecadienoyl)-N-acetylsphing-4-enine + 1-hexadecanoyl-sn-glycero-3-phosphocholine. The catalysed reaction is 1-hexadecanoyl-2-(5Z,8Z,11Z,14Z-eicosatetraenoyl)-sn-glycero-3-phosphocholine + N-(acetyl)-sphing-4-enine = 1-(5Z,8Z,11Z,14Z)-eicosatetraenoyl-N-(acetyl)-sphing-4-enine + 1-hexadecanoyl-sn-glycero-3-phosphocholine. The enzyme catalyses 1-hexadecanoyl-2-(4Z,7Z,10Z,13Z,16Z,19Z-docosahexaenoyl)-sn-glycero-3-phosphocholine + N-(acetyl)-sphing-4-enine = 1-(4Z,7Z,10Z,13Z,16Z,19Z-docosahexaenoyl)-N-(acetyl)-sphing-4-enine + 1-hexadecanoyl-sn-glycero-3-phosphocholine. It carries out the reaction 1-octadecanoyl-2-(9Z-octadecenoyl)-sn-glycero-3-phosphocholine + N-(acetyl)-sphing-4-enine = 1-(9Z-octadecenoyl)-N-(acetyl)-sphing-4-enine + 1-octadecanoyl-sn-glycero-3-phosphocholine. It catalyses the reaction 1-octadecanoyl-2-(9Z,12Z)-octadecadienoyl-sn-glycero-3-phosphocholine + N-(acetyl)-sphing-4-enine = 1-(9Z,12Z-octadecadienoyl)-N-acetylsphing-4-enine + 1-octadecanoyl-sn-glycero-3-phosphocholine. The catalysed reaction is 1-(9Z-octadecenoyl)-2-hexadecanoyl-sn-glycero-3-phosphocholine + N-(acetyl)-sphing-4-enine = 1-hexadecanoyl-N-(acetyl)-sphing-4-enine + 1-(9Z-octadecenoyl)-sn-glycero-3-phosphocholine. The enzyme catalyses 1-(9Z)-octadecenoyl-2-octadecanoyl-sn-glycero-3-phosphocholine + N-(acetyl)-sphing-4-enine = 1-octadecanoyl-N-(acetyl)-sphing-4-enine + 1-(9Z-octadecenoyl)-sn-glycero-3-phosphocholine. It carries out the reaction 1,2-di-(9Z-octadecenoyl)-sn-glycero-3-phosphocholine + N-(acetyl)-sphing-4-enine = 1-(9Z-octadecenoyl)-N-(acetyl)-sphing-4-enine + 1-(9Z-octadecenoyl)-sn-glycero-3-phosphocholine. It catalyses the reaction 1-octadecanoyl-2-(5Z,8Z,11Z,14Z-eicosatetraenoyl)-sn-glycero-3-phosphocholine + N-(acetyl)-sphing-4-enine = 1-(5Z,8Z,11Z,14Z)-eicosatetraenoyl-N-(acetyl)-sphing-4-enine + 1-octadecanoyl-sn-glycero-3-phosphocholine. The catalysed reaction is a 1,2-diacyl-sn-glycero-3-phospho-L-serine + N-(acetyl)-sphing-4-enine = a 2-acyl-sn-glycero-3-phospho-L-serine + 1-O-acyl-N-(acetyl)-sphing-4-enine. The enzyme catalyses 1-octadecanoyl-2-(9Z-octadecenoyl)-sn-glycero-3-phospho-L-serine + N-(acetyl)-sphing-4-enine = 2-(9Z-octadecenoyl)-sn-glycero-3-phospho-L-serine + 1-octadecanoyl-N-(acetyl)-sphing-4-enine. It carries out the reaction a 1,2-diacyl-sn-glycero-3-phospho-L-serine + N-(acetyl)-sphing-4-enine = 1-O-acyl-N-(acetyl)-sphing-4-enine + a 1-acyl-sn-glycero-3-phospho-L-serine. It catalyses the reaction 1-octadecanoyl-2-(9Z-octadecenoyl)-sn-glycero-3-phospho-L-serine + N-(acetyl)-sphing-4-enine = 1-octadecanoyl-sn-glycero-3-phosphoserine + 1-(9Z-octadecenoyl)-N-(acetyl)-sphing-4-enine. The catalysed reaction is a 1,2-diacyl-sn-glycero-3-phospho-(1'-sn-glycerol) + N-(acetyl)-sphing-4-enine = 2-acyl-sn-glycero-3-phospho-(1'-sn-glycerol) + 1-O-acyl-N-(acetyl)-sphing-4-enine. The enzyme catalyses 1-octadecanoyl-2-(9Z-octadecenoyl)-sn-glycero-3-phospho-(1'-sn-glycerol) + N-(acetyl)-sphing-4-enine = 2-(9Z-octadecenoyl)-sn-glycero-3-phospho-(1'-sn-glycerol) + 1-octadecanoyl-N-(acetyl)-sphing-4-enine. It carries out the reaction a 1,2-diacyl-sn-glycero-3-phospho-(1'-sn-glycerol) + N-(acetyl)-sphing-4-enine = 1-O-acyl-N-(acetyl)-sphing-4-enine + 1-acyl-sn-glycero-3-phospho-(1'-sn-glycerol). It catalyses the reaction 1-octadecanoyl-2-(9Z-octadecenoyl)-sn-glycero-3-phospho-(1'-sn-glycerol) + N-(acetyl)-sphing-4-enine = 1-octadecanoyl-sn-glycero-3-phospho-(1'-sn-glycerol) + 1-(9Z-octadecenoyl)-N-(acetyl)-sphing-4-enine. The catalysed reaction is an N-acylethanolamine + a 1,2-diacyl-sn-glycero-3-phosphocholine = 2-(acylamino)ethyl fatty acid + a 2-acyl-sn-glycero-3-phosphocholine. The enzyme catalyses an N-acylethanolamine + a 1,2-diacyl-sn-glycero-3-phosphocholine = 2-(acylamino)ethyl fatty acid + a 1-acyl-sn-glycero-3-phosphocholine. It carries out the reaction N-(5Z,8Z,11Z,14Z-eicosatetraenoyl)-ethanolamine + 1,2-di-(9Z-octadecenoyl)-sn-glycero-3-phosphocholine = 2-[(5Z,8Z,11Z,14Z)-eicosatetraenoylamino]ethyl (9Z)-octadecenoate + (9Z-octadecenoyl)-sn-glycero-3-phosphocholine. It catalyses the reaction N-(9Z-octadecenoyl) ethanolamine + 1,2-di-(9Z-octadecenoyl)-sn-glycero-3-phosphocholine = 2-[(9Z)-octadecenoylamino]ethyl (9Z)-octadecenoate + (9Z-octadecenoyl)-sn-glycero-3-phosphocholine. The catalysed reaction is a 3-acyl-sn-glycerol + a 1,2-diacyl-sn-glycero-3-phosphocholine = a 1,3-diacylglycerol + a 1-acyl-sn-glycero-3-phosphocholine. The enzyme catalyses a 3-acyl-sn-glycerol + a 1,2-diacyl-sn-glycero-3-phosphocholine = a 1,3-diacylglycerol + a 2-acyl-sn-glycero-3-phosphocholine. It carries out the reaction 3-(9Z-octadecenoyl)-sn-glycerol + 1,2-di-(9Z-octadecenoyl)-sn-glycero-3-phosphocholine = 1,3-di-(9Z-octadecenoyl)-glycerol + (9Z-octadecenoyl)-sn-glycero-3-phosphocholine. It catalyses the reaction 3-hexadecanoyl-sn-glycerol + 1,2-di-(9Z-octadecenoyl)-sn-glycero-3-phosphocholine = 1-(9Z)-octadecenoyl-3-hexadecanoyl-sn-glycerol + (9Z-octadecenoyl)-sn-glycero-3-phosphocholine. The catalysed reaction is a 1-acyl-sn-glycerol + a 1,2-diacyl-sn-glycero-3-phosphocholine = a 1,3-diacylglycerol + a 2-acyl-sn-glycero-3-phosphocholine. The enzyme catalyses a 1-acyl-sn-glycerol + a 1,2-diacyl-sn-glycero-3-phosphocholine = a 1,3-diacylglycerol + a 1-acyl-sn-glycero-3-phosphocholine. It carries out the reaction 1-(9Z-octadecenoyl)-sn-glycerol + 1,2-di-(9Z-octadecenoyl)-sn-glycero-3-phosphocholine = 1,3-di-(9Z-octadecenoyl)-glycerol + (9Z-octadecenoyl)-sn-glycero-3-phosphocholine. It catalyses the reaction 1-hexadecanoyl-sn-glycerol + 1,2-di-(9Z-octadecenoyl)-sn-glycero-3-phosphocholine = 1-hexadecanoyl-3-(9Z)-octadecenoyl-sn-glycerol + (9Z-octadecenoyl)-sn-glycero-3-phosphocholine. The catalysed reaction is a 2-acylglycerol + a 1,2-diacyl-sn-glycero-3-phosphocholine = a 1,2-diacylglycerol + a 2-acyl-sn-glycero-3-phosphocholine. The enzyme catalyses a 2-acylglycerol + a 1,2-diacyl-sn-glycero-3-phosphocholine = a 1,2-diacylglycerol + a 1-acyl-sn-glycero-3-phosphocholine. It carries out the reaction 2-hexadecanoylglycerol + 1,2-di-(9Z-octadecenoyl)-sn-glycero-3-phosphocholine = 1-(9Z)-octadecenoyl-2-hexadecanoylglycerol + (9Z-octadecenoyl)-sn-glycero-3-phosphocholine. It catalyses the reaction 1-O-alkylglycerol + a 1,2-diacyl-sn-glycero-3-phosphocholine = 1-O-alkyl-3-acylglycerol + a 1-acyl-sn-glycero-3-phosphocholine. The catalysed reaction is 1-O-alkylglycerol + a 1,2-diacyl-sn-glycero-3-phosphocholine = 1-O-alkyl-3-acylglycerol + a 2-acyl-sn-glycero-3-phosphocholine. The enzyme catalyses 1-O-hexadecylglycerol + 1,2-di-(9Z-octadecenoyl)-sn-glycero-3-phosphocholine = 1-O-hexadecyl-3-(9Z)-octadecenoylglycerol + (9Z-octadecenoyl)-sn-glycero-3-phosphocholine. It carries out the reaction 1-O-alkyl-2-acyl-sn-glycerol + a 1,2-diacyl-sn-glycero-3-phosphocholine = 1-O-alkyl-2,3-diacyl-sn-glycerol + a 2-acyl-sn-glycero-3-phosphocholine. It catalyses the reaction 1-O-alkyl-2-acyl-sn-glycerol + a 1,2-diacyl-sn-glycero-3-phosphocholine = 1-O-alkyl-2,3-diacyl-sn-glycerol + a 1-acyl-sn-glycero-3-phosphocholine. The catalysed reaction is 1-O-hexadecyl-2-acetyl-sn-glycerol + 1,2-di-(9Z-octadecenoyl)-sn-glycero-3-phosphocholine = 1-O-hexadecyl-2-acetyl-3-(9Z)-octadecenoyl-sn-glycerol + (9Z-octadecenoyl)-sn-glycero-3-phosphocholine. The enzyme catalyses 1-O-hexadecyl-2-O-methyl-sn-glycerol + 1,2-di-(9Z-octadecenoyl)-sn-glycero-3-phosphocholine = 1-O-hexadecyl-2-O-methyl-3-(9Z)-octadecenoyl-sn-glycerol + (9Z-octadecenoyl)-sn-glycero-3-phosphocholine. It carries out the reaction a 1,2-diacyl-sn-glycero-3-phosphoethanolamine + H2O = a 1-acyl-sn-glycero-3-phosphoethanolamine + a fatty acid + H(+). It catalyses the reaction 1-acyl-2-(5Z,8Z,11Z,14Z)-eicosatetraenoyl-sn-glycero-3-phosphoethanolamine + H2O = a 1-acyl-sn-glycero-3-phosphoethanolamine + (5Z,8Z,11Z,14Z)-eicosatetraenoate + H(+). The catalysed reaction is a 1,2-diacyl-sn-glycero-3-phospho-(1'-sn-glycerol) + H2O = 1-acyl-sn-glycero-3-phospho-(1'-sn-glycerol) + a fatty acid + H(+). The enzyme catalyses 1-hexadecanoyl-2-(9Z-octadecenoyl)-sn-glycero-3-phospho-(1'-sn-glycerol) + H2O = 1-hexadecanoyl-sn-glycero-3-phospho-(1'-sn-glycerol) + (9Z)-octadecenoate + H(+). It carries out the reaction a 1,2-diacyl-sn-glycero-3-phospho-(1'-sn-glycerol) + H2O = 2-acyl-sn-glycero-3-phospho-(1'-sn-glycerol) + a fatty acid + H(+). It catalyses the reaction 1-hexadecanoyl-2-(9Z-octadecenoyl)-sn-glycero-3-phospho-(1'-sn-glycerol) + H2O = 2-(9Z-octadecenoyl)-sn-glycero-3-phospho-(1'-sn-glycerol) + hexadecanoate + H(+). Its function is as follows. Has dual calcium-independent phospholipase and O-acyltransferase activities with a potential role in glycerophospholipid homeostasis and remodeling of acyl groups of lipophilic alcohols present in acidic cellular compartments. Catalyzes hydrolysis of the ester bond of the fatty acyl group attached at sn-1 or sn-2 position of phospholipids (phospholipase A1 or A2 activity) and transfer it to the hydroxyl group at the first carbon of lipophilic alcohols (O-acyltransferase activity). Among preferred fatty acyl donors are phosphatidylcholines, phosphatidylethanolamines, phosphatidylglycerols and phosphatidylserines. Favors sn-2 over sn-1 deacylation of unsaturated fatty acyl groups of phosphatidylcholines, phosphatidylethanolamines, and phosphatidylglycerols. Among preferred fatty acyl acceptors are natural lipophilic alcohols including short-chain ceramide N-acetyl-sphingosine (C2 ceramide), alkylacylglycerols, monoacylglycerols, and acylethanolamides such as anandamide and oleoylethanolamide. Selectively hydrolyzes the sn-1 fatty acyl group of truncated oxidized phospholipids and may play a role in detoxification of reactive oxidized phospholipids during oxidative stress. Required for normal phospholipid degradation in alveolar macrophages with potential implications in the clearance of pulmonary surfactant, which is mainly composed of dipalmitoylphosphatidylcholine (1,2-dihexadecanoyl-sn-glycero-3-phosphocholine). Involved in the first step of bis(monoacylglycero)phosphate (BMP) de novo synthesis from phosphatidylglycerol (1,2-diacyl-sn-glycero-3-phospho-(1'-sn-glycerol), PG). BMP is an important player in cargo sorting and degradation, regulation of cellular cholesterol levels and intercellular communication. At neutral pH, hydrolyzes the sn-1 fatty acyl group of the lysophosphatidylcholines. This is Lysosomal phospholipase A and acyltransferase (PLA2G15) from Canis lupus familiaris (Dog).